The sequence spans 640 residues: tRNA-dihydrouridine(47) synthase [NAD(P)(+)]-like (640 aa).

Residues 1–11 (MAESEGSNTEN) are compositionally biased toward polar residues. 2 disordered regions span residues 1–23 (MAES…ENLD) and 43–123 (FIDA…HSQF). A compositionally biased stretch (basic and acidic residues) spans 43–57 (FIDADGKDVTEKETC). Residues 58 to 72 (SELSLNDAENTTRTE) are compositionally biased toward polar residues. Residues 77 to 86 (PEAKRIKLDD) show a composition bias toward basic and acidic residues. The segment covering 104-120 (EKKRARGQNKSRPHMKH) has biased composition (basic residues). 2 C3H1-type zinc fingers span residues 123 to 153 (FEEN…HDVA) and 161 to 191 (EDIR…HLGE). Residues 301–303 (PLT) and glutamine 355 each bind FMN. Cysteine 386 functions as the Proton donor in the catalytic mechanism. FMN-binding positions include lysine 425, histidine 455, 487-489 (NGD), and 510-511 (AR).

The protein belongs to the Dus family. Dus3 subfamily. Requires FMN as cofactor.

It catalyses the reaction 5,6-dihydrouridine(47) in tRNA + NAD(+) = uridine(47) in tRNA + NADH + H(+). It carries out the reaction 5,6-dihydrouridine(47) in tRNA + NADP(+) = uridine(47) in tRNA + NADPH + H(+). The catalysed reaction is a 5,6-dihydrouridine in mRNA + NAD(+) = a uridine in mRNA + NADH + H(+). The enzyme catalyses a 5,6-dihydrouridine in mRNA + NADP(+) = a uridine in mRNA + NADPH + H(+). In terms of biological role, catalyzes the synthesis of dihydrouridine, a modified base, in various RNAs, such as tRNAs, mRNAs and some long non-coding RNAs (lncRNAs). Mainly modifies the uridine in position 47 (U47) in the D-loop of most cytoplasmic tRNAs. Also able to mediate the formation of dihydrouridine in some mRNAs, thereby regulating their translation. The polypeptide is tRNA-dihydrouridine(47) synthase [NAD(P)(+)]-like (dus3l) (Xenopus laevis (African clawed frog)).